The sequence spans 176 residues: MSRVGKSPVALQGAEVALSDERITVKGPLGTISQAANSLVKVVNDNGTLKFEPVDESREANAMSGTMRALVANMVNGVTKGFERKLTLVGVGYRAQAQGDKLNLSLGFSHPVVHQMPEGIKAETPTQTEIVIKGINKQQVGQVAAEVRGYRPPEPYKGKGVRYANEVVILKETKKK.

Belongs to the universal ribosomal protein uL6 family. In terms of assembly, part of the 50S ribosomal subunit.

Functionally, this protein binds to the 23S rRNA, and is important in its secondary structure. It is located near the subunit interface in the base of the L7/L12 stalk, and near the tRNA binding site of the peptidyltransferase center. This chain is Large ribosomal subunit protein uL6, found in Paraburkholderia xenovorans (strain LB400).